The chain runs to 122 residues: Large ribosomal subunit protein uL14 (122 aa).

This sequence belongs to the universal ribosomal protein uL14 family. In terms of assembly, part of the 50S ribosomal subunit. Forms a cluster with proteins L3 and L19. In the 70S ribosome, L14 and L19 interact and together make contacts with the 16S rRNA in bridges B5 and B8.

Binds to 23S rRNA. Forms part of two intersubunit bridges in the 70S ribosome. The protein is Large ribosomal subunit protein uL14 of Lactobacillus delbrueckii subsp. bulgaricus (strain ATCC 11842 / DSM 20081 / BCRC 10696 / JCM 1002 / NBRC 13953 / NCIMB 11778 / NCTC 12712 / WDCM 00102 / Lb 14).